The sequence spans 675 residues: Putative exonuclease GOR (675 aa).

A compositionally biased stretch (basic and acidic residues) spans 66–79 (VAKEAAPEASRHLG). Disordered regions lie at residues 66-90 (VAKE…APEG) and 225-263 (AKRT…TATT). Residues 358 to 483 (MPGLSRAALY…VRDGRKESLD (126 aa)) form a GOR1-125 epitope region.

This sequence belongs to the REXO1/REXO3 family.

It localises to the cytoplasm. Its subcellular location is the nucleus. This is Putative exonuclease GOR (REXO1L1P) from Homo sapiens (Human).